The chain runs to 159 residues: 2-C-methyl-D-erythritol 2,4-cyclodiphosphate synthase (159 aa).

The a divalent metal cation site is built by Asp8 and His10. 4-CDP-2-C-methyl-D-erythritol 2-phosphate-binding positions include 8–10 and 34–35; these read DSH and HS. An a divalent metal cation-binding site is contributed by His42. Residues 56–58, 61–65, Phe139, and Arg142 contribute to the 4-CDP-2-C-methyl-D-erythritol 2-phosphate site; these read DIG and FPDSD.

It belongs to the IspF family. In terms of assembly, homotrimer. It depends on a divalent metal cation as a cofactor.

The enzyme catalyses 4-CDP-2-C-methyl-D-erythritol 2-phosphate = 2-C-methyl-D-erythritol 2,4-cyclic diphosphate + CMP. The protein operates within isoprenoid biosynthesis; isopentenyl diphosphate biosynthesis via DXP pathway; isopentenyl diphosphate from 1-deoxy-D-xylulose 5-phosphate: step 4/6. Involved in the biosynthesis of isopentenyl diphosphate (IPP) and dimethylallyl diphosphate (DMAPP), two major building blocks of isoprenoid compounds. Catalyzes the conversion of 4-diphosphocytidyl-2-C-methyl-D-erythritol 2-phosphate (CDP-ME2P) to 2-C-methyl-D-erythritol 2,4-cyclodiphosphate (ME-CPP) with a corresponding release of cytidine 5-monophosphate (CMP). In Syntrophus aciditrophicus (strain SB), this protein is 2-C-methyl-D-erythritol 2,4-cyclodiphosphate synthase.